We begin with the raw amino-acid sequence, 75 residues long: UPF0235 protein Mvan_2846 (75 aa).

It belongs to the UPF0235 family.

In Mycolicibacterium vanbaalenii (strain DSM 7251 / JCM 13017 / BCRC 16820 / KCTC 9966 / NRRL B-24157 / PYR-1) (Mycobacterium vanbaalenii), this protein is UPF0235 protein Mvan_2846.